Consider the following 1176-residue polypeptide: Carbamoyl phosphate synthase arginine-specific large chain (1176 aa).

The transit peptide at 1–11 directs the protein to the mitochondrion; that stretch reads MLRSISIASRA. A carboxyphosphate synthetic domain region spans residues 70–465; it reads SRSPDVKKVL…SLQKAIRQVD (396 aa). ATP-binding residues include R197, R237, G243, G244, K273, L275, E280, G306, T307, H308, Q348, and E362. One can recognise an ATP-grasp 1 domain in the interval 201-391; it reads VQALNEIDIP…LAYTAAKIAL (191 aa). Mg(2+) contacts are provided by Q348, E362, and N364. Q348, E362, and N364 together coordinate Mn(2+). The oligomerization domain stretch occupies residues 466 to 610; that stretch reads PNFAGFEAYW…YTSYNATTHD (145 aa). A carbamoyl phosphate synthetic domain region spans residues 611-997; it reads VKFDNGTMVL…AYWAALLSVN (387 aa). The 198-residue stretch at 734-931 folds into the ATP-grasp 2 domain; that stretch reads SSILDSIGVD…FIDTASAAIM (198 aa). The ATP site is built by R770, Q809, I811, E816, G841, V842, H843, S844, Q884, and E902. Positions 884, 902, and 904 each coordinate Mg(2+). 3 residues coordinate Mn(2+): Q884, E902, and N904. The allosteric domain stretch occupies residues 998-1137; the sequence is GMKLPKANSG…NPIPYSEGFK (140 aa). Positions 999–1154 constitute an MGS-like domain; the sequence is MKLPKANSGI…RDFVGEAATT (156 aa).

It belongs to the CarB family. Heterodimer composed of 2 chains; the small (or glutamine) chain promotes the hydrolysis of glutamine to ammonia, which is used by the large (or ammonia) chain to synthesize carbamoyl phosphate. Mg(2+) serves as cofactor. Mn(2+) is required as a cofactor.

Its subcellular location is the mitochondrion. The catalysed reaction is hydrogencarbonate + L-glutamine + 2 ATP + H2O = carbamoyl phosphate + L-glutamate + 2 ADP + phosphate + 2 H(+). It carries out the reaction hydrogencarbonate + NH4(+) + 2 ATP = carbamoyl phosphate + 2 ADP + phosphate + 2 H(+). The protein operates within amino-acid biosynthesis; L-arginine biosynthesis; carbamoyl phosphate from bicarbonate: step 1/1. Large subunit of the arginine-specific carbamoyl phosphate synthase (CPSase). CPSase catalyzes the formation of carbamoyl phosphate from the ammonia moiety of glutamine, hydrogencarbonate, and phosphate donated by ATP, constituting the first step of 2 biosynthetic pathways, one leading to arginine and/or urea and the other to pyrimidine nucleotides. The large subunit (synthetase) binds the substrates ammonia (free or transferred from glutamine from the small subunit), hydrogencarbonate and ATP and carries out an ATP-coupled ligase reaction, activating hydrogencarbonate by forming carboxy phosphate which reacts with ammonia to form carbamoyl phosphate. In Cutaneotrichosporon cutaneum (Yeast), this protein is Carbamoyl phosphate synthase arginine-specific large chain (argA).